The following is a 119-amino-acid chain: Large ribosomal subunit protein uL18 (119 aa).

This sequence belongs to the universal ribosomal protein uL18 family. Part of the 50S ribosomal subunit; part of the 5S rRNA/L5/L18/L25 subcomplex. Contacts the 5S and 23S rRNAs.

In terms of biological role, this is one of the proteins that bind and probably mediate the attachment of the 5S RNA into the large ribosomal subunit, where it forms part of the central protuberance. This chain is Large ribosomal subunit protein uL18, found in Clostridium kluyveri (strain ATCC 8527 / DSM 555 / NBRC 12016 / NCIMB 10680 / K1).